The chain runs to 345 residues: Ubiquitin-associated domain-containing protein 2 (345 aa).

A signal peptide spans 1–35 (MFTSTGSSGLYKAPLSKSLLLVPSALSLLLALLLP). Residues 36-91 (HCQKLFVYDLHAVKNDFQIWRLICGRIICLDLKDTFCSSLLIYNFRIFERRYGSRK) are Extracellular-facing. Residues 92-112 (FASFLLGSWVLSALFDFLLVE) traverse the membrane as a helical segment. The Cytoplasmic segment spans residues 113-125 (AMQYFFGITAASN). A helical transmembrane segment spans residues 126-146 (LPSGFLAPVFALFVPFYCSIP). Residues 147–163 (RVQVAQILGPLSITNKT) lie on the Extracellular side of the membrane. N-linked (GlcNAc...) asparagine glycosylation is present at asparagine 161. Residues 164–184 (LIYILGLQLFTSGSYIWIVAI) traverse the membrane as a helical segment. At 185 to 345 (SGLMSGLCYN…NVATNFLLQH (161 aa)) the chain is on the cytoplasmic side. The UBA domain maps to 305-345 (EVSEEQVARLMEMGFSRGDALEALRASNNDLNVATNFLLQH).

As to quaternary structure, interacts with LMBR1L, FAF2, AMFR and VCP.

The protein resides in the endoplasmic reticulum membrane. Restricts trafficking of FAF2 from the endoplasmic reticulum to lipid droplets. In association with LMBR1L and E3 ubiquitin-protein ligase AMFR, negatively regulates the canonical Wnt signaling pathway in the lymphocytes by promoting the ubiquitin-mediated degradation of CTNNB1 and Wnt receptors FZD6 and LRP6. The protein is Ubiquitin-associated domain-containing protein 2 (UBAC2) of Macaca fascicularis (Crab-eating macaque).